Here is a 63-residue protein sequence, read N- to C-terminus: MKIAEIRGMTPDQLADTLISLKKEQFNLRFQAATGQVEKTHRVNEIRKDIARIKTVLRAKAAA.

The protein belongs to the universal ribosomal protein uL29 family.

The polypeptide is Large ribosomal subunit protein uL29 (Caulobacter vibrioides (strain ATCC 19089 / CIP 103742 / CB 15) (Caulobacter crescentus)).